A 222-amino-acid polypeptide reads, in one-letter code: Protein ORM1 (222 aa).

Residues 1 to 57 (MTELDYQGTAEAASTSYSRNQTDLKPFPSAGSASSSIKTTEPVKDHRRRRSSSIISH) form a disordered region. Over 1–85 (MTELDYQGTA…NATWVDQRGA (85 aa)) the chain is Cytoplasmic. Over residues 12 to 23 (AASTSYSRNQTD) the composition is skewed to polar residues. A phosphoserine mark is found at S29, S32, and S56. The chain crosses the membrane as a helical span at residues 86 to 106 (WIIHVVIIILLKLFYNLFPGV). Residues 107–109 (TTE) lie on the Extracellular side of the membrane. The helical transmembrane segment at 110–130 (WSWTLTNMTYVIGSYVMFHLI) threads the bilayer. The Cytoplasmic portion of the chain corresponds to 131-162 (KGTPFDFNGGAYDNLTMWEQIDDETLYTPSRK). Residues 163 to 183 (FLISVPIALFLVSTHYAHYDL) traverse the membrane as a helical segment. Residue K184 is a topological domain, extracellular. The chain crosses the membrane as a helical span at residues 185–205 (LFSWNCFLTTFGAVVPKLPVT). The Cytoplasmic segment spans residues 206–222 (HRLRISIPGITGRAQIS).

It belongs to the ORM family. Component of the SPOTS complex, at least composed of LCB1/2 (LCB1 and/or LCB2), ORM1/2 (ORM1 and/or ORM2), SAC1 and TSC3. Phosphorylated in case of disruption of sphingolipid synthesis. Phosphorylation regulates inhibitory activity of serine palmitoyltransferases (LCB1 and LCB2).

Its subcellular location is the endoplasmic reticulum membrane. Functionally, component of the SPOTS complex that acts as a negative regulator of sphingolipid synthesis. Acts by inhibiting serine palmitoyltransferases (LCB1 and LCB2) activity. Along with ORM2, plays a role in the phosphorylation of LAC1 and YPK1, the distribution of actin patches between mother and daughter cells, and in endocytosis. Disruption or inhibition of sphingolipid synthesis leads to the activation and phosphorylation of YPK1 through the TORC2 and PKH1 pathways, which in turn phosphorylates ORM1 and LAG1 to activate sphingolipid synthesis. This is Protein ORM1 (ORM1) from Saccharomyces cerevisiae (strain ATCC 204508 / S288c) (Baker's yeast).